The sequence spans 325 residues: NADH-quinone oxidoreductase subunit H (325 aa).

Helical transmembrane passes span 11–31, 50–69, 81–101, 114–134, 154–174, 186–206, 237–257, 265–285, and 304–324; these read ILLSILKAVVILLVVVTCGAF, NRVGWGGSLQLVADMIKMFF, VIFTLAPMIAFTSLLLSFAIV, IGILFFLMMAGLAVYAVLFAG, VSYEVFLGLSLMGVVAQAGSF, LWNVIPQFFGFVTFAIAGVAV, FFVGEYIGIVTVSALMVTLFF, LPPFVWFALKTAFFMMMFILI, and VCLPLTLINLLVTAAVILWQA.

The protein belongs to the complex I subunit 1 family. In terms of assembly, NDH-1 is composed of 13 different subunits. Subunits NuoA, H, J, K, L, M, N constitute the membrane sector of the complex.

The protein resides in the cell inner membrane. It carries out the reaction a quinone + NADH + 5 H(+)(in) = a quinol + NAD(+) + 4 H(+)(out). Functionally, NDH-1 shuttles electrons from NADH, via FMN and iron-sulfur (Fe-S) centers, to quinones in the respiratory chain. The immediate electron acceptor for the enzyme in this species is believed to be ubiquinone. Couples the redox reaction to proton translocation (for every two electrons transferred, four hydrogen ions are translocated across the cytoplasmic membrane), and thus conserves the redox energy in a proton gradient. This subunit may bind ubiquinone. The protein is NADH-quinone oxidoreductase subunit H of Salmonella agona (strain SL483).